Reading from the N-terminus, the 62-residue chain is Large ribosomal subunit protein eL24 (62 aa).

Zn(2+) is bound by residues Cys-6, Cys-9, Cys-32, and Cys-36. Residues 6–36 (CSFCEGKIEPGCGKKYVKKDGSVMQFCSSKC) form a C4-type zinc finger.

It belongs to the eukaryotic ribosomal protein eL24 family. In terms of assembly, part of the 50S ribosomal subunit. Forms a cluster with proteins L3 and L14. It depends on Zn(2+) as a cofactor.

Binds to the 23S rRNA. In Methanococcus vannielii (strain ATCC 35089 / DSM 1224 / JCM 13029 / OCM 148 / SB), this protein is Large ribosomal subunit protein eL24.